The sequence spans 185 residues: Small ribosomal subunit protein bS6 (185 aa).

Residues 115–141 (AAQKAAAEKAEAARLEAEKAAEEEAAK) show a composition bias toward basic and acidic residues. A disordered region spans residues 115–185 (AAQKAAAEKA…EEPKSDEEDA (71 aa)). Positions 142–169 (AAEAQAKEAPAAEAPAEEAPAAEAPAEA) are enriched in low complexity. Positions 170–185 (PAEEPAEEPKSDEEDA) are enriched in acidic residues.

The protein belongs to the bacterial ribosomal protein bS6 family.

In terms of biological role, binds together with bS18 to 16S ribosomal RNA. This chain is Small ribosomal subunit protein bS6, found in Desulfatibacillum aliphaticivorans.